A 507-amino-acid chain; its full sequence is MAEEQAYHVNKGLECIKALRARPLDPLVVEEALAAWVETSEGQTLDRMSSDEAEADHQDISKPCFPAAGPGKSSMSRCHDQGLGGSNSCDEELGAFIGDSSMHSTEVQHYHVYDHSGEKVEGVEDADSILVQSGADDGVEVWGGDEESENSDVDSGEPDPEGSAPADWGSSPISPATRASDVETVEGDEIQKLLEDQSRIRKMTKAGKTLVVPPIPSQERPTASEKPIKKGTDVKSTSSGTMAESSSTGGATRPALKSQWGPSGPNASAENALASASNVSPTQGSKTESGTTTSRISQSNIEPEDDYDDELFSDIQDIKTALAKLHDDQQIIITRLESLVSLKGEIDSIKKQISKQNISISTIEGHLSSVMIAIPGFGKDPNDPTADVDINPDLRPIIGRDSGRALAEVLKKPASERQSKDTGKLGIESKGLLKKEFQLKPIEKKSSSAIRFVPDGSVASRSVIRSIIKSSHLGEDRKDYLMSLLNDIQGSKDLAQFHQMLVKILKN.

Phosphoserine is present on residues Ser86 and Ser151. The span at 137–160 (DGVEVWGGDEESENSDVDSGEPDP) shows a compositional bias: acidic residues. The segment at 137–307 (DGVEVWGGDE…QSNIEPEDDY (171 aa)) is disordered. Basic and acidic residues-rich tracts occupy residues 189–199 (EIQKLLEDQSR) and 222–233 (TASEKPIKKGTD). 2 stretches are compositionally biased toward low complexity: residues 236 to 252 (STSSGTMAESSSTGGAT) and 266 to 278 (NASAENALASASN). Over residues 279–301 (VSPTQGSKTESGTTTSRISQSNI) the composition is skewed to polar residues. Positions 304–376 (EDDYDDELFS…LSSVMIAIPG (73 aa)) are multimerization. The interaction with the nucleocapsid (N-RNA) stretch occupies residues 459 to 507 (ASRSVIRSIIKSSHLGEDRKDYLMSLLNDIQGSKDLAQFHQMLVKILKN).

It belongs to the morbillivirus P protein family. As to quaternary structure, homotetramer. Interacts (via multimerization domain) with polymerase L; this interaction forms the polymerase L-P complex. Interacts (via N-terminus) with N0 (via Ncore); this interaction allows P to chaperon N0 to avoid N polymerization before encapsidation. Interacts (via C-terminus) with N-RNA template; this interaction positions the polymerase on the template for both transcription and replication. Phosphorylation on serines by host CK2 is necessary for the formation of viral factories.

In terms of biological role, essential cofactor of the RNA polymerase L that plays a central role in the transcription and replication by forming the polymerase complex with RNA polymerase L and recruiting L to the genomic N-RNA template for RNA synthesis. Also plays a central role in the encapsidation of nascent RNA chains by forming the encapsidation complex with the nucleocapsid protein N (N-P complex). Acts as a chaperone for newly synthesized free N protein, so-called N0, allowing encapsidation of nascent RNA chains during replication. The nucleoprotein protein N prevents excessive phosphorylation of P, which leads to down-regulation of viral transcription/ replication. Participates, together with N, in the formation of viral factories (viroplasms), which are large inclusions in the host cytoplasm where replication takes place. The protein is Phosphoprotein (P/V) of Bos indicus (Zebu).